A 192-amino-acid polypeptide reads, in one-letter code: Fe/S biogenesis protein NfuA (192 aa).

The [4Fe-4S] cluster site is built by cysteine 149 and cysteine 152.

Belongs to the NfuA family. As to quaternary structure, homodimer. Requires [4Fe-4S] cluster as cofactor.

Its function is as follows. Involved in iron-sulfur cluster biogenesis. Binds a 4Fe-4S cluster, can transfer this cluster to apoproteins, and thereby intervenes in the maturation of Fe/S proteins. Could also act as a scaffold/chaperone for damaged Fe/S proteins. This Shewanella baltica (strain OS223) protein is Fe/S biogenesis protein NfuA.